We begin with the raw amino-acid sequence, 199 residues long: NADH-quinone oxidoreductase subunit C (199 aa).

Belongs to the complex I 30 kDa subunit family. As to quaternary structure, NDH-1 is composed of 14 different subunits. Subunits NuoB, C, D, E, F, and G constitute the peripheral sector of the complex.

It localises to the cell membrane. It carries out the reaction a quinone + NADH + 5 H(+)(in) = a quinol + NAD(+) + 4 H(+)(out). Its function is as follows. NDH-1 shuttles electrons from NADH, via FMN and iron-sulfur (Fe-S) centers, to quinones in the respiratory chain. The immediate electron acceptor for the enzyme in this species is believed to be ubiquinone. Couples the redox reaction to proton translocation (for every two electrons transferred, four hydrogen ions are translocated across the cytoplasmic membrane), and thus conserves the redox energy in a proton gradient. In Polynucleobacter asymbioticus (strain DSM 18221 / CIP 109841 / QLW-P1DMWA-1) (Polynucleobacter necessarius subsp. asymbioticus), this protein is NADH-quinone oxidoreductase subunit C.